The following is a 217-amino-acid chain: ATP phosphoribosyltransferase (217 aa).

Belongs to the ATP phosphoribosyltransferase family. Short subfamily. Heteromultimer composed of HisG and HisZ subunits.

The protein localises to the cytoplasm. It catalyses the reaction 1-(5-phospho-beta-D-ribosyl)-ATP + diphosphate = 5-phospho-alpha-D-ribose 1-diphosphate + ATP. Its pathway is amino-acid biosynthesis; L-histidine biosynthesis; L-histidine from 5-phospho-alpha-D-ribose 1-diphosphate: step 1/9. In terms of biological role, catalyzes the condensation of ATP and 5-phosphoribose 1-diphosphate to form N'-(5'-phosphoribosyl)-ATP (PR-ATP). Has a crucial role in the pathway because the rate of histidine biosynthesis seems to be controlled primarily by regulation of HisG enzymatic activity. This Neisseria meningitidis serogroup A / serotype 4A (strain DSM 15465 / Z2491) protein is ATP phosphoribosyltransferase (hisG).